Reading from the N-terminus, the 351-residue chain is Phosphate acyltransferase (351 aa).

The protein belongs to the PlsX family. In terms of assembly, homodimer. Probably interacts with PlsY.

The protein localises to the cytoplasm. The enzyme catalyses a fatty acyl-[ACP] + phosphate = an acyl phosphate + holo-[ACP]. The protein operates within lipid metabolism; phospholipid metabolism. Catalyzes the reversible formation of acyl-phosphate (acyl-PO(4)) from acyl-[acyl-carrier-protein] (acyl-ACP). This enzyme utilizes acyl-ACP as fatty acyl donor, but not acyl-CoA. In Neisseria meningitidis serogroup C / serotype 2a (strain ATCC 700532 / DSM 15464 / FAM18), this protein is Phosphate acyltransferase.